Here is a 477-residue protein sequence, read N- to C-terminus: Aspartyl/glutamyl-tRNA(Asn/Gln) amidotransferase subunit B (477 aa).

This sequence belongs to the GatB/GatE family. GatB subfamily. Heterotrimer of A, B and C subunits.

It catalyses the reaction L-glutamyl-tRNA(Gln) + L-glutamine + ATP + H2O = L-glutaminyl-tRNA(Gln) + L-glutamate + ADP + phosphate + H(+). The enzyme catalyses L-aspartyl-tRNA(Asn) + L-glutamine + ATP + H2O = L-asparaginyl-tRNA(Asn) + L-glutamate + ADP + phosphate + 2 H(+). Allows the formation of correctly charged Asn-tRNA(Asn) or Gln-tRNA(Gln) through the transamidation of misacylated Asp-tRNA(Asn) or Glu-tRNA(Gln) in organisms which lack either or both of asparaginyl-tRNA or glutaminyl-tRNA synthetases. The reaction takes place in the presence of glutamine and ATP through an activated phospho-Asp-tRNA(Asn) or phospho-Glu-tRNA(Gln). The sequence is that of Aspartyl/glutamyl-tRNA(Asn/Gln) amidotransferase subunit B from Ureaplasma parvum serovar 3 (strain ATCC 27815 / 27 / NCTC 11736).